The primary structure comprises 36 residues: MTDLNLPSIFVPLVGLMFPAIAMASLSLHIQKNKII.

A helical transmembrane segment spans residues 6–28; sequence LPSIFVPLVGLMFPAIAMASLSL.

This sequence belongs to the PsaI family.

The protein resides in the plastid. It is found in the chloroplast thylakoid membrane. Functionally, may help in the organization of the PsaL subunit. This chain is Photosystem I reaction center subunit VIII, found in Calycanthus floridus var. glaucus (Eastern sweetshrub).